Here is a 383-residue protein sequence, read N- to C-terminus: S-adenosylmethionine synthase (383 aa).

H15 serves as a coordination point for ATP. A Mg(2+)-binding site is contributed by D17. E43 is a K(+) binding site. L-methionine-binding residues include E56 and Q99. The flexible loop stretch occupies residues 99 to 109 (QSPDINQGVDR). ATP contacts are provided by residues 164–166 (DAK), 230–231 (RF), D239, 245–246 (RK), A262, and K266. D239 is a binding site for L-methionine. An L-methionine-binding site is contributed by K270.

This sequence belongs to the AdoMet synthase family. Homotetramer; dimer of dimers. It depends on Mg(2+) as a cofactor. The cofactor is K(+).

The protein resides in the cytoplasm. It catalyses the reaction L-methionine + ATP + H2O = S-adenosyl-L-methionine + phosphate + diphosphate. The protein operates within amino-acid biosynthesis; S-adenosyl-L-methionine biosynthesis; S-adenosyl-L-methionine from L-methionine: step 1/1. Catalyzes the formation of S-adenosylmethionine (AdoMet) from methionine and ATP. The overall synthetic reaction is composed of two sequential steps, AdoMet formation and the subsequent tripolyphosphate hydrolysis which occurs prior to release of AdoMet from the enzyme. In Shewanella sp. (strain W3-18-1), this protein is S-adenosylmethionine synthase.